The following is a 357-amino-acid chain: Fulicin peptides (357 aa).

The signal sequence occupies residues 1 to 17 (MQPTVLLILMTSCLTYQ). Positions 18 to 119 (VIADKPKGNH…VDGSQGHLEP (102 aa)) are excised as a propeptide. D-asparagine is present on Asn123. Val126 is subject to Valine amide. The propeptide occupies 130-194 (NTLPEEAGSF…YNTMNEDEAS (65 aa)). Valine amide is present on residues Val201 and Val209. A leucine amide mark is found at Leu217 and Leu226. Residues Ile233 and Ile242 each carry the isoleucine amide modification. 2 positions are modified to valine amide: Val250 and Val259. Positions 263–298 (NQGVFTVSPSSTKISFDDNYLPYLSSVDAGDLSDVN) are excised as a propeptide. At Leu305 the chain carries Leucine amide. A propeptide spanning residues 311–357 (TAEQDETSQRSNERLVALLQNTGFRKRLSRMLQNQRLVEHYPEFIGK) is cleaved from the precursor.

In terms of tissue distribution, found in central ganglia and the ventricles and atria of the heart.

Its function is as follows. Potentiates tetanic contraction of the penis retractor muscle at very low concentrations, and also shows modulatory actions on the activity of the buccal and ventricular muscles and the central ganglionic neurons. The polypeptide is Fulicin peptides (Lissachatina fulica (Giant African land snail)).